A 1314-amino-acid polypeptide reads, in one-letter code: Enfumafungin synthase efuA (1314 aa).

Positions 1–680 (MPSYHNTDKT…RYIDKASRQG (680 aa)) are terpenne cyclase. 2 PFTB repeats span residues 19–62 (LQQA…ELSL) and 66–107 (GPEI…RILG). 3 consecutive transmembrane segments (helical) span residues 133 to 153 (FFTRFFLATFGLVPWTAIPQM), 155 to 175 (AELILLPTFMFLNIYVLSSWA), and 230 to 250 (YQWIEFAFTLLDHILALFGGL). One copy of the PFTB 3 repeat lies at 260–300 (LKRCTAWLLEHQEESGDWAGFFPPIHGSIWALLLDGFSFQS). Residue aspartate 395 is the Proton donor of the active site. PFTB repeat units lie at residues 417-458 (VMNG…DSLV) and 546-597 (CMRT…LRFR). The glycosyltransferase stretch occupies residues 681–1314 (IETLRIPSSS…ADSVLDIEEK (634 aa)). Residues 1200 to 1220 (AIVQLLYGFTTTILALFGWLK) traverse the membrane as a helical segment. The segment at 1289 to 1314 (DSGASESSRSSLDGGHADSVLDIEEK) is disordered. A compositionally biased stretch (low complexity) spans 1292–1302 (ASESSRSSLDG).

It in the N-terminal section; belongs to the terpene cyclase/mutase family. This sequence in the C-terminal section; belongs to the glycosyltransferase 28 family.

The protein localises to the membrane. The protein operates within secondary metabolite biosynthesis; terpenoid biosynthesis. Functionally, terpene cyclase-glycosyl transferase fusion protein; part of the gene cluster that mediates the biosynthesis of enfumafungin, a glycosylated fernene-type triterpenoid with potent antifungal activity, mediated by its interaction with beta-1,3-glucan synthase and the fungal cell wall. The pathway begins with the terpene cyclase-glycosyl transferase fusion protein that most likely uses 2,3-oxidosqualene as substrate and catalyzes glycosylation immediately after cyclization. The fernene glycoside then could be processed by the desaturase efuI which catalyzes isomerization of a double bond established by efuA to form the core structure. The latter would then undergo a series of hydroxylations in unknown order at C-2, C-19, C-23 and C-25, which would be catalyzed by two of the three cytochrome P450 monooxygenases efuB, efuG or efuH. The hydroxy-group at C-25 becomes oxidized by the dehydrogenase efuE to enable a spontaneous, non-enzymatic hemiacetal formation with C-23. After hydroxylation at C-2, acetylation by the acetyltransferase efuC takes place. The final steps in enfumafungin biosynthesis require expansion of the 5-membered ring by lactonization via a Baeyer-Villiger reaction mediated by one of the BGC's cytochrome P450 monooxygenases (efuB, efuG or efuH) followed by ring cleavage. This type of reaction would establish a double bond between C-20 and C-21 which could be reduced by the reductase efuL to form the final product. This Hormonema carpetanum protein is Enfumafungin synthase efuA.